A 657-amino-acid chain; its full sequence is Acetyl-coenzyme A synthetase (657 aa).

Residues Arg-192–Lys-195 and Thr-311 contribute to the CoA site. ATP is bound by residues Gly-387 to Pro-389, Asp-411 to Thr-416, Asp-504, Arg-519, and Arg-530. His-543 and Val-546 together coordinate Mg(2+). Arg-592 provides a ligand contact to CoA. Position 617 is an N6-acetyllysine (Lys-617).

Belongs to the ATP-dependent AMP-binding enzyme family. Mg(2+) is required as a cofactor. In terms of processing, acetylated. Deacetylation by the SIR2-homolog deacetylase activates the enzyme.

It catalyses the reaction acetate + ATP + CoA = acetyl-CoA + AMP + diphosphate. Functionally, catalyzes the conversion of acetate into acetyl-CoA (AcCoA), an essential intermediate at the junction of anabolic and catabolic pathways. AcsA undergoes a two-step reaction. In the first half reaction, AcsA combines acetate with ATP to form acetyl-adenylate (AcAMP) intermediate. In the second half reaction, it can then transfer the acetyl group from AcAMP to the sulfhydryl group of CoA, forming the product AcCoA. The polypeptide is Acetyl-coenzyme A synthetase (Campylobacter jejuni subsp. jejuni serotype O:6 (strain 81116 / NCTC 11828)).